A 320-amino-acid polypeptide reads, in one-letter code: Phosphate acyltransferase (320 aa).

The protein belongs to the PlsX family. In terms of assembly, homodimer. Probably interacts with PlsY.

Its subcellular location is the cytoplasm. The enzyme catalyses a fatty acyl-[ACP] + phosphate = an acyl phosphate + holo-[ACP]. The protein operates within lipid metabolism; phospholipid metabolism. Functionally, catalyzes the reversible formation of acyl-phosphate (acyl-PO(4)) from acyl-[acyl-carrier-protein] (acyl-ACP). This enzyme utilizes acyl-ACP as fatty acyl donor, but not acyl-CoA. The polypeptide is Phosphate acyltransferase (Syntrophomonas wolfei subsp. wolfei (strain DSM 2245B / Goettingen)).